The primary structure comprises 911 residues: Zinc finger protein 721 (911 aa).

The C2H2-type 1; degenerate zinc-finger motif lies at 69 to 91 (FQCNARVKVFSKFANSNKDKTRH). The C2H2-type 2 zinc-finger motif lies at 97–119 (FKCNECGKSFQKFSDLTQHKGIH). The C2H2-type 3; degenerate zinc-finger motif lies at 125–147 (YTCEERGKDFGWYTDLNQHKKIH). The C2H2-type 4 zinc-finger motif lies at 153 to 175 (YKCEECGKAFNRSTNLTAHKRIH). Residues 181 to 203 (YTGEDRDRAFGWSTNLNEYKKIH) form a C2H2-type 5; degenerate zinc finger. C2H2-type zinc fingers lie at residues 209–231 (YKCKECGKAFMHSSHLNKHEKIH), 237–259 (YKCKECGKVISSSSSFAKHKRIH), 265–287 (FKCLECGKAFNISTTLTKHRRIH), 293–315 (YTCEVCGKAFRQSANLYVHRRIH), 321–343 (YTCGECGKTFRQSANLYVHRRIH), 349–371 (YKCEDCGKAFGRYTALNQHKKIH), and 377–399 (YKCEECGKAFNSSTNLTAHKRIH). Residues 405-427 (YTCEDRGRAFGLSTNLNEYKKIH) form a C2H2-type 13; degenerate zinc finger. 6 consecutive C2H2-type zinc fingers follow at residues 433-455 (YKCKECGKAFIHSLHLNKHEKIH), 461-483 (YKCKQCGKVITSSSSFAKHKRIH), 489-511 (FECLECGKAFTSSTTLTKHRRIH), 517-539 (YTCEVCGKAFRQSAILYVHRRIH), 545-567 (YTCEECGKTFRQSANLYVHRRIH), and 573-595 (YKCEECGKAFGRYTDLNQHKKIH). A Glycyl lysine isopeptide (Lys-Gly) (interchain with G-Cter in SUMO2) cross-link involves residue Lys-478. The C2H2-type 20; degenerate zinc-finger motif lies at 601–623 (YKCEECGKDFVWYTDLNQQKKIY). Residues 629–651 (YKCEECGKAFAPSTDLNQHTKIL) form a C2H2-type 21; degenerate zinc finger. Lys-649 is covalently cross-linked (Glycyl lysine isopeptide (Lys-Gly) (interchain with G-Cter in SUMO2)). 2 consecutive C2H2-type zinc fingers follow at residues 657 to 679 (YKCEECGKAFGWSIALNQHKKIH) and 685 to 707 (YKCEECGKAFSRSRNLTTHRRVH). The C2H2-type 24; degenerate zinc-finger motif lies at 713–735 (YKCEDRGRSFGWSTNLNEYKKIH). 6 consecutive C2H2-type zinc fingers follow at residues 741-763 (YKCKECGKVFKQSSHLNRHEKIH), 769-791 (YKCKECGKVITSSSSFAKHKRIH), 797-819 (FKCLECGKAFTSSTTLTKHRRIH), 825-847 (YTCEECGKAFRQSAILYVHRRIH), 853-875 (YTCGECGKTFRQSANLYAHKKIH), and 881-903 (YTCGDCGKTFRQSANLYAHKKIH). A Glycyl lysine isopeptide (Lys-Gly) (interchain with G-Cter in SUMO2) cross-link involves residue Lys-786.

This sequence belongs to the krueppel C2H2-type zinc-finger protein family.

The protein resides in the nucleus. Its function is as follows. May be involved in transcriptional regulation. This Homo sapiens (Human) protein is Zinc finger protein 721 (ZNF721).